The sequence spans 144 residues: Large ribosomal subunit protein uL13 (144 aa).

It belongs to the universal ribosomal protein uL13 family. In terms of assembly, part of the 50S ribosomal subunit.

In terms of biological role, this protein is one of the early assembly proteins of the 50S ribosomal subunit, although it is not seen to bind rRNA by itself. It is important during the early stages of 50S assembly. In Clostridium acetobutylicum (strain ATCC 824 / DSM 792 / JCM 1419 / IAM 19013 / LMG 5710 / NBRC 13948 / NRRL B-527 / VKM B-1787 / 2291 / W), this protein is Large ribosomal subunit protein uL13.